The following is a 114-amino-acid chain: uncharacterized protein (114 aa).

The active site involves C10.

Belongs to the ArsC family.

This is an uncharacterized protein from Haemophilus influenzae (strain ATCC 51907 / DSM 11121 / KW20 / Rd).